A 466-amino-acid chain; its full sequence is Cysteine--tRNA ligase (466 aa).

Cys29 provides a ligand contact to Zn(2+). The 'HIGH' region signature appears at 31 to 41 (ATVQAAPHIGH). Cys208, His233, and Glu237 together coordinate Zn(2+). A 'KMSKS' region motif is present at residues 264 to 268 (KMSKS). Lys267 contacts ATP.

This sequence belongs to the class-I aminoacyl-tRNA synthetase family. Monomer. Zn(2+) is required as a cofactor.

The protein localises to the cytoplasm. It catalyses the reaction tRNA(Cys) + L-cysteine + ATP = L-cysteinyl-tRNA(Cys) + AMP + diphosphate. The chain is Cysteine--tRNA ligase from Streptomyces avermitilis (strain ATCC 31267 / DSM 46492 / JCM 5070 / NBRC 14893 / NCIMB 12804 / NRRL 8165 / MA-4680).